Reading from the N-terminus, the 474-residue chain is Trehalose-6-phosphate synthase (474 aa).

D-glucose 6-phosphate is bound at residue arginine 10. 22–23 (GG) contributes to the UDP-alpha-D-glucose binding site. 2 residues coordinate D-glucose 6-phosphate: tyrosine 77 and aspartate 131. 2 residues coordinate UDP-alpha-D-glucose: arginine 263 and lysine 268. Arginine 301 is a D-glucose 6-phosphate binding site. UDP-alpha-D-glucose-binding positions include phenylalanine 340 and 366 to 370 (LVAKE).

Belongs to the glycosyltransferase 20 family. As to quaternary structure, homotetramer.

It catalyses the reaction D-glucose 6-phosphate + UDP-alpha-D-glucose = alpha,alpha-trehalose 6-phosphate + UDP + H(+). It participates in glycan biosynthesis; trehalose biosynthesis. In terms of biological role, probably involved in the osmoprotection via the biosynthesis of trehalose. Catalyzes the transfer of glucose from UDP-alpha-D-glucose (UDP-Glc) to D-glucose 6-phosphate (Glc-6-P) to form trehalose-6-phosphate. Acts with retention of the anomeric configuration of the UDP-sugar donor. In Escherichia coli O6:K15:H31 (strain 536 / UPEC), this protein is Trehalose-6-phosphate synthase.